The chain runs to 65 residues: Metallothionein-like protein 3B (65 aa).

Belongs to the metallothionein superfamily. Type 15 family. Expressed in leaves and rachis.

Its function is as follows. Metallothioneins have a high content of cysteine residues that bind various heavy metals. The polypeptide is Metallothionein-like protein 3B (MT3B) (Oryza sativa subsp. japonica (Rice)).